A 100-amino-acid polypeptide reads, in one-letter code: Urease subunit gamma (100 aa).

The protein belongs to the urease gamma subunit family. As to quaternary structure, heterotrimer of UreA (gamma), UreB (beta) and UreC (alpha) subunits. Three heterotrimers associate to form the active enzyme.

It localises to the cytoplasm. It catalyses the reaction urea + 2 H2O + H(+) = hydrogencarbonate + 2 NH4(+). It participates in nitrogen metabolism; urea degradation; CO(2) and NH(3) from urea (urease route): step 1/1. The polypeptide is Urease subunit gamma (Azoarcus sp. (strain BH72)).